We begin with the raw amino-acid sequence, 103 residues long: uncharacterized protein (103 aa).

The chain crosses the membrane as a helical span at residues 38–58 (FTTLITIYVAAFYTGVIGAAV).

The protein localises to the membrane. This is an uncharacterized protein from Arabidopsis thaliana (Mouse-ear cress).